We begin with the raw amino-acid sequence, 118 residues long: Holo-[acyl-carrier-protein] synthase (118 aa).

The Mg(2+) site is built by Asp-5 and Glu-51.

Belongs to the P-Pant transferase superfamily. AcpS family. Mg(2+) serves as cofactor.

It localises to the cytoplasm. It carries out the reaction apo-[ACP] + CoA = holo-[ACP] + adenosine 3',5'-bisphosphate + H(+). Transfers the 4'-phosphopantetheine moiety from coenzyme A to a Ser of acyl-carrier-protein. The protein is Holo-[acyl-carrier-protein] synthase of Helicobacter pylori (strain P12).